Consider the following 123-residue polypeptide: Small ribosomal subunit protein uS12 (123 aa).

At Asp-89 the chain carries 3-methylthioaspartic acid.

The protein belongs to the universal ribosomal protein uS12 family. Part of the 30S ribosomal subunit. Contacts proteins S8 and S17. May interact with IF1 in the 30S initiation complex.

In terms of biological role, with S4 and S5 plays an important role in translational accuracy. Functionally, interacts with and stabilizes bases of the 16S rRNA that are involved in tRNA selection in the A site and with the mRNA backbone. Located at the interface of the 30S and 50S subunits, it traverses the body of the 30S subunit contacting proteins on the other side and probably holding the rRNA structure together. The combined cluster of proteins S8, S12 and S17 appears to hold together the shoulder and platform of the 30S subunit. This Bifidobacterium animalis subsp. lactis (strain AD011) protein is Small ribosomal subunit protein uS12.